Here is a 154-residue protein sequence, read N- to C-terminus: Small ribosomal subunit protein bS16 (154 aa).

The disordered stretch occupies residues valine 82–alanine 154. The span at lysine 92 to alanine 109 shows a compositional bias: basic and acidic residues. The segment covering lysine 110–proline 129 has biased composition (low complexity). Residues proline 142–alanine 154 show a composition bias toward acidic residues.

It belongs to the bacterial ribosomal protein bS16 family.

The protein is Small ribosomal subunit protein bS16 of Rhizorhabdus wittichii (strain DSM 6014 / CCUG 31198 / JCM 15750 / NBRC 105917 / EY 4224 / RW1) (Sphingomonas wittichii).